Here is a 354-residue protein sequence, read N- to C-terminus: Guanine nucleotide-binding protein G(o) subunit alpha (354 aa).

Gly2 carries the N-myristoyl glycine lipid modification. Residue Cys3 is the site of S-palmitoyl cysteine attachment. Residues 32–354 enclose the G-alpha domain; it reads KDIKLLLLGA…ANNLRGCGLY (323 aa). The tract at residues 35–48 is G1 motif; the sequence is KLLLLGAGESGKST. GTP-binding positions include 40–47, 176–182, 201–205, 270–273, and Ala326; these read GAGESGKS, LRTRVKT, DVGGQ, and NKKD. 2 residues coordinate Mg(2+): Ser47 and Thr182. Residues 174 to 182 are G2 motif; that stretch reads DILRTRVKT. The interval 197–206 is G3 motif; that stretch reads FKLFDVGGQR. The G4 motif stretch occupies residues 266–273; it reads ILFLNKKD. The interval 324 to 329 is G5 motif; sequence TCATDT.

Belongs to the G-alpha family. G(i/o/t/z) subfamily. G proteins are composed of 3 units; alpha, beta and gamma. The alpha chain contains the guanine nucleotide binding site.

Its function is as follows. Guanine nucleotide-binding proteins (G proteins) are involved as modulators or transducers in various transmembrane signaling systems. The G(o) protein function is not clear. The sequence is that of Guanine nucleotide-binding protein G(o) subunit alpha from Lymnaea stagnalis (Great pond snail).